Consider the following 708-residue polypeptide: Polyribonucleotide nucleotidyltransferase (708 aa).

Positions 487 and 493 each coordinate Mg(2+). Residues 554-613 (PRIHTMKISADKIKDVIGKGGAVIRALTEETGTTIEIEDDGTIKIAATEGAAAKEAIRRI) form the KH domain. Positions 623 to 691 (GVIYTGKVAR…RQGRVRLSMK (69 aa)) constitute an S1 motif domain.

It belongs to the polyribonucleotide nucleotidyltransferase family. In terms of assembly, component of the RNA degradosome, which is a multiprotein complex involved in RNA processing and mRNA degradation. Mg(2+) serves as cofactor.

Its subcellular location is the cytoplasm. It carries out the reaction RNA(n+1) + phosphate = RNA(n) + a ribonucleoside 5'-diphosphate. Its function is as follows. Involved in mRNA degradation. Catalyzes the phosphorolysis of single-stranded polyribonucleotides processively in the 3'- to 5'-direction. The sequence is that of Polyribonucleotide nucleotidyltransferase from Vibrio vulnificus (strain CMCP6).